We begin with the raw amino-acid sequence, 410 residues long: Killer cell immunoglobulin-like receptor 3DL3 (410 aa).

The signal sequence occupies residues 1–25; it reads MSLMVVSMACVGFFLLEGPWPHVGG. Over 26–322 the chain is Extracellular; sequence QDKPFLSAWP…VSVTGNSRHL (297 aa). 3 Ig-like C2-type domains span residues 42–97, 137–197, and 237–295; these read GQHV…RCCS, GETV…RCFG, and GENV…RCFG. Disulfide bonds link cysteine 49–cysteine 95 and cysteine 144–cysteine 195. N-linked (GlcNAc...) asparagine glycans are attached at residues asparagine 179, asparagine 239, and asparagine 273. Cysteine 244 and cysteine 293 are oxidised to a cystine. Residues 323–343 form a helical membrane-spanning segment; it reads HVLIGTSVVIIPFAILLFFLL. Topologically, residues 344–410 are cytoplasmic; that stretch reads HRWCANKKNA…PKTPPTDTSV (67 aa).

It belongs to the immunoglobulin superfamily.

The protein localises to the cell membrane. In terms of biological role, receptor on natural killer cells. May inhibit the activity of NK cells thus preventing cell lysis. This chain is Killer cell immunoglobulin-like receptor 3DL3 (KIR3DL3), found in Homo sapiens (Human).